Here is a 464-residue protein sequence, read N- to C-terminus: MMARRDPTSWAKRLVRAQTLQKQRRAPVGPRAPPPDEEDPRLKCKNCGAFGHTARSTRCPMKCWKAALVPATLGKKEGKENLKPWKPRVEANPGPLNKDKGEKEERPRQQDPQRKALLHMFSGKPPEKPLPNGKGSTEPSDYLRVASGPMPVHTTSKRPRVDPVLADGSATEMSGRGSVLASLSPLRKASLSSSSSLGPKERQTGAAADIPQPAVRHQGREPLLVVKPTHSSPEGGCREVPQAASKTHGLLQAARPQAQDKRPAVTSQPCPPAATHSLGLGSNLSFGPGAKRPAQAPIQACLNFPKKPRLGPFQIPESAIQGGELGALENLQPPPAATELGPSTSPQMGRRTSAQVPSVERQPPHSRPCLPTAQACTMSHHSAASHDGAQPLRVLFRRLENGRWSSSLLAAPSFHSPEKPGAFLAQSPHVSEKSEAPCVRVPPSVLYEDLQVSSSSEDSDSDLE.

3 disordered regions span residues methionine 1–leucine 42, proline 70–alanine 389, and histidine 415–proline 437. 2 stretches are compositionally biased toward basic and acidic residues: residues glycine 74–valine 89 and asparagine 97–arginine 114. The segment covering leucine 180–leucine 197 has biased composition (low complexity). Residues glycine 341 to valine 356 show a composition bias toward polar residues.

Belongs to the FAM90 family.

This is Protein FAM90A11 from Homo sapiens (Human).